Consider the following 389-residue polypeptide: uncharacterized protein (389 aa).

Disordered stretches follow at residues 119 to 156, 180 to 233, 294 to 321, and 362 to 389; these read SSLFDARKSSRSRGAVIKSPSTINIEKNRHSSNSGENQ, PTSK…SSMG, SIPSGRNSESARSRQTKRSPFGSVTSRT, and PEDMQEEDEKHNGSVWGSDTSLEEEIKV. Residues 137–155 are compositionally biased toward polar residues; it reads SPSTINIEKNRHSSNSGEN. Acidic residues predominate over residues 190 to 204; that stretch reads DDGDEEDDTDDEGEA.

This is an uncharacterized protein from Caenorhabditis elegans.